The following is a 410-amino-acid chain: Regulator of microtubule dynamics protein 2 (410 aa).

Residues 10 to 27 (IFGIMVGTAGISLLLLWY) form a helical membrane-spanning segment. The residue at position 51 (Ser-51) is a Phosphoserine. Residues 68-110 (FQERQLQILEKLNELLTNMEELKEEIRFLKETVPKLEEYIQDE) adopt a coiled-coil conformation. The residue at position 121 (Ser-121) is a Phosphoserine. Residues 122-131 (PQHRARKRRL) show a composition bias toward basic residues. Residues 122–151 (PQHRARKRRLPTIQSSATSNSSEEAESEGG) form a disordered region. Thr-139 carries the post-translational modification Phosphothreonine. Tyr-152 carries the phosphotyrosine modification. A phosphothreonine mark is found at Thr-154 and Thr-157.

Belongs to the RMDN family. Interacts with microtubules.

The protein localises to the membrane. It is found in the cytoplasm. Its subcellular location is the cytoskeleton. The protein resides in the spindle. It localises to the spindle pole. The polypeptide is Regulator of microtubule dynamics protein 2 (RMDN2) (Macaca fascicularis (Crab-eating macaque)).